The primary structure comprises 259 residues: Probable metal transport system ATP-binding protein CPn_0348/CP_0412/CPj0348/CpB0355 (259 aa).

An ABC transporter domain is found at 3 to 241 (VKDETFWSVH…TIFQTYGCEI (239 aa)). 41 to 48 (GPNGAGKS) serves as a coordination point for ATP.

Belongs to the ABC transporter superfamily.

The protein localises to the cell inner membrane. Part of an ATP-driven transport system CPn0346/CPn0347/CPn0348/CPn0349 for a metal. Probably responsible for energy coupling to the transport system. The protein is Probable metal transport system ATP-binding protein CPn_0348/CP_0412/CPj0348/CpB0355 of Chlamydia pneumoniae (Chlamydophila pneumoniae).